We begin with the raw amino-acid sequence, 119 residues long: Large ribosomal subunit protein bL20 (119 aa).

This sequence belongs to the bacterial ribosomal protein bL20 family.

Functionally, binds directly to 23S ribosomal RNA and is necessary for the in vitro assembly process of the 50S ribosomal subunit. It is not involved in the protein synthesizing functions of that subunit. The protein is Large ribosomal subunit protein bL20 of Laribacter hongkongensis (strain HLHK9).